A 363-amino-acid chain; its full sequence is Holliday junction branch migration complex subunit RuvB (363 aa).

The tract at residues 1–32 (MAIQTDSFAAAPAPSSGSTRRLISAAPTSPNE) is disordered. Positions 7 to 18 (SFAAAPAPSSGS) are enriched in low complexity. Residues 13–200 (APSSGSTRRL…FGIVARLEFY (188 aa)) form a large ATPase domain (RuvB-L) region. Residues L39, R40, G81, K84, T85, T86, 147-149 (EDY), R190, Y200, and R237 contribute to the ATP site. T85 provides a ligand contact to Mg(2+). A small ATPAse domain (RuvB-S) region spans residues 201–271 (TPEELVRIVT…IAELALTMLD (71 aa)). A head domain (RuvB-H) region spans residues 274–363 (PRGFDVMDRK…GPVGSDLFEG (90 aa)). The DNA site is built by R329 and R334.

It belongs to the RuvB family. As to quaternary structure, homohexamer. Forms an RuvA(8)-RuvB(12)-Holliday junction (HJ) complex. HJ DNA is sandwiched between 2 RuvA tetramers; dsDNA enters through RuvA and exits via RuvB. An RuvB hexamer assembles on each DNA strand where it exits the tetramer. Each RuvB hexamer is contacted by two RuvA subunits (via domain III) on 2 adjacent RuvB subunits; this complex drives branch migration. In the full resolvosome a probable DNA-RuvA(4)-RuvB(12)-RuvC(2) complex forms which resolves the HJ.

The protein localises to the cytoplasm. It catalyses the reaction ATP + H2O = ADP + phosphate + H(+). The RuvA-RuvB-RuvC complex processes Holliday junction (HJ) DNA during genetic recombination and DNA repair, while the RuvA-RuvB complex plays an important role in the rescue of blocked DNA replication forks via replication fork reversal (RFR). RuvA specifically binds to HJ cruciform DNA, conferring on it an open structure. The RuvB hexamer acts as an ATP-dependent pump, pulling dsDNA into and through the RuvAB complex. RuvB forms 2 homohexamers on either side of HJ DNA bound by 1 or 2 RuvA tetramers; 4 subunits per hexamer contact DNA at a time. Coordinated motions by a converter formed by DNA-disengaged RuvB subunits stimulates ATP hydrolysis and nucleotide exchange. Immobilization of the converter enables RuvB to convert the ATP-contained energy into a lever motion, pulling 2 nucleotides of DNA out of the RuvA tetramer per ATP hydrolyzed, thus driving DNA branch migration. The RuvB motors rotate together with the DNA substrate, which together with the progressing nucleotide cycle form the mechanistic basis for DNA recombination by continuous HJ branch migration. Branch migration allows RuvC to scan DNA until it finds its consensus sequence, where it cleaves and resolves cruciform DNA. The polypeptide is Holliday junction branch migration complex subunit RuvB (Leptothrix cholodnii (strain ATCC 51168 / LMG 8142 / SP-6) (Leptothrix discophora (strain SP-6))).